Consider the following 509-residue polypeptide: Glycerol kinase (509 aa).

Residue Thr-17 participates in ADP binding. Thr-17, Thr-18, and Ser-19 together coordinate ATP. Thr-17 is a binding site for sn-glycerol 3-phosphate. Arg-21 contacts ADP. Sn-glycerol 3-phosphate contacts are provided by Arg-87, Glu-88, Tyr-139, and Asp-256. Residues Arg-87, Glu-88, Tyr-139, Asp-256, and Gln-257 each contribute to the glycerol site. Residues Thr-278 and Gly-322 each contribute to the ADP site. Residues Thr-278, Gly-322, Gln-326, and Ala-423 each contribute to the ATP site. Residues Ala-423 and Asn-427 each coordinate ADP.

Belongs to the FGGY kinase family.

It catalyses the reaction glycerol + ATP = sn-glycerol 3-phosphate + ADP + H(+). It functions in the pathway polyol metabolism; glycerol degradation via glycerol kinase pathway; sn-glycerol 3-phosphate from glycerol: step 1/1. Its activity is regulated as follows. Inhibited by fructose 1,6-bisphosphate (FBP). Functionally, key enzyme in the regulation of glycerol uptake and metabolism. Catalyzes the phosphorylation of glycerol to yield sn-glycerol 3-phosphate. The protein is Glycerol kinase of Corynebacterium glutamicum (strain R).